A 127-amino-acid chain; its full sequence is Mediator of RNA polymerase II transcription subunit 31 (127 aa).

Belongs to the Mediator complex subunit 31 family. In terms of assembly, component of the Mediator complex, which is composed of at least 21 subunits that form three structurally distinct submodules. The Mediator head module contains MED6, MED8, MED11, SRB4/MED17, SRB5/MED18, ROX3/MED19, SRB2/MED20 and SRB6/MED22, the middle module contains MED1, MED4, NUT1/MED5, MED7, CSE2/MED9, NUT2/MED10, SRB7/MED21 and SOH1/MED31, and the tail module contains MED2, PGD1/MED3, RGR1/MED14, GAL11/MED15 and SIN4/MED16. The head and the middle modules interact directly with RNA polymerase II, whereas the elongated tail module interacts with gene-specific regulatory proteins.

It is found in the nucleus. Its function is as follows. Component of the Mediator complex, a coactivator involved in the regulated transcription of nearly all RNA polymerase II-dependent genes. Mediator functions as a bridge to convey information from gene-specific regulatory proteins to the basal RNA polymerase II transcription machinery. The Mediator complex, having a compact conformation in its free form, is recruited to promoters by direct interactions with regulatory proteins and serves for the assembly of a functional preinitiation complex with RNA polymerase II and the general transcription factors. The Mediator complex unfolds to an extended conformation and partially surrounds RNA polymerase II, specifically interacting with the unphosphorylated form of the C-terminal domain (CTD) of RNA polymerase II. The Mediator complex dissociates from the RNA polymerase II holoenzyme and stays at the promoter when transcriptional elongation begins. This is Mediator of RNA polymerase II transcription subunit 31 (SOH1) from Saccharomyces cerevisiae (strain ATCC 204508 / S288c) (Baker's yeast).